A 308-amino-acid polypeptide reads, in one-letter code: Putative S-adenosyl-L-methionine-dependent methyltransferase Mjls_1073 (308 aa).

S-adenosyl-L-methionine-binding positions include Asp-133 and 162–163; that span reads DL.

It belongs to the UPF0677 family.

Exhibits S-adenosyl-L-methionine-dependent methyltransferase activity. The protein is Putative S-adenosyl-L-methionine-dependent methyltransferase Mjls_1073 of Mycobacterium sp. (strain JLS).